The following is a 79-amino-acid chain: Small ribosomal subunit protein bS16 (79 aa).

It belongs to the bacterial ribosomal protein bS16 family.

The polypeptide is Small ribosomal subunit protein bS16 (Hahella chejuensis (strain KCTC 2396)).